A 248-amino-acid chain; its full sequence is uncharacterized protein (248 aa).

6 helical membrane passes run 65-85, 105-125, 126-146, 156-176, 188-208, and 222-242; these read IIIYGVILQIYTTILFKQFLT, SITSFFYNGFCHVAVMIILWY, ISWTLIDYGTLVIAIMILGFI, LCCFIAIFTSIVHSTFFTLLI, LILNLTFLTITYILMILSDYS, and VIYIYCIQIIILQFIFIYKYT.

The protein resides in the cell membrane. This is an uncharacterized protein from Rickettsia prowazekii (strain Madrid E).